The chain runs to 108 residues: Thiosulfate sulfurtransferase GlpE (108 aa).

A Rhodanese domain is found at Gln-18–Leu-106. Catalysis depends on Cys-66, which acts as the Cysteine persulfide intermediate.

It belongs to the GlpE family.

The protein resides in the cytoplasm. It carries out the reaction thiosulfate + hydrogen cyanide = thiocyanate + sulfite + 2 H(+). The catalysed reaction is thiosulfate + [thioredoxin]-dithiol = [thioredoxin]-disulfide + hydrogen sulfide + sulfite + 2 H(+). In terms of biological role, transferase that catalyzes the transfer of sulfur from thiosulfate to thiophilic acceptors such as cyanide or dithiols. May function in a CysM-independent thiosulfate assimilation pathway by catalyzing the conversion of thiosulfate to sulfite, which can then be used for L-cysteine biosynthesis. In Glaesserella parasuis serovar 5 (strain SH0165) (Haemophilus parasuis), this protein is Thiosulfate sulfurtransferase GlpE.